The primary structure comprises 187 residues: Orotate phosphoribosyltransferase (187 aa).

5-phospho-alpha-D-ribose 1-diphosphate-binding positions include arginine 98, lysine 99, lysine 102, histidine 104, and 128–136; that span reads EDVTTTGGS. Orotate-binding residues include threonine 132 and arginine 160.

Belongs to the purine/pyrimidine phosphoribosyltransferase family. PyrE subfamily. As to quaternary structure, homodimer. It depends on Mg(2+) as a cofactor.

The catalysed reaction is orotidine 5'-phosphate + diphosphate = orotate + 5-phospho-alpha-D-ribose 1-diphosphate. It participates in pyrimidine metabolism; UMP biosynthesis via de novo pathway; UMP from orotate: step 1/2. Its function is as follows. Catalyzes the transfer of a ribosyl phosphate group from 5-phosphoribose 1-diphosphate to orotate, leading to the formation of orotidine monophosphate (OMP). This chain is Orotate phosphoribosyltransferase, found in Rhodopseudomonas palustris (strain TIE-1).